Consider the following 436-residue polypeptide: Cytochrome b5-related protein (436 aa).

The region spanning 16–100 (PTYRNSALIT…IAKYKVRDAA (85 aa)) is the Cytochrome b5 heme-binding domain. 2 residues coordinate heme: histidine 59 and histidine 82.

In terms of tissue distribution, muscle.

May play a role in muscle cell metabolism. This is Cytochrome b5-related protein (Cyt-b5-r) from Drosophila melanogaster (Fruit fly).